The chain runs to 388 residues: Protein-glutamate methylesterase/protein-glutamine glutaminase 1 (388 aa).

In terms of domain architecture, Response regulatory spans 4-121 (QVLVVDDSSF…ATNKDEAIRL (118 aa)). The residue at position 55 (Asp55) is a 4-aspartylphosphate. The disordered stretch occupies residues 149–190 (SARAGLSSTSPTLGSSTLGRSPASGLASSASRNSPTVSTPAS). A compositionally biased stretch (low complexity) spans 153–169 (GLSSTSPTLGSSTLGRS). Positions 174-189 (LASSASRNSPTVSTPA) are enriched in polar residues. A CheB-type methylesterase domain is found at 188 to 388 (PASAIRASGK…EAILKESGRG (201 aa)). Active-site residues include Ser207, His234, and Asp330.

This sequence belongs to the CheB family. Post-translationally, phosphorylated by CheA. Phosphorylation of the N-terminal regulatory domain activates the methylesterase activity.

Its subcellular location is the cytoplasm. It carries out the reaction [protein]-L-glutamate 5-O-methyl ester + H2O = L-glutamyl-[protein] + methanol + H(+). The enzyme catalyses L-glutaminyl-[protein] + H2O = L-glutamyl-[protein] + NH4(+). In terms of biological role, involved in chemotaxis. Part of a chemotaxis signal transduction system that modulates chemotaxis in response to various stimuli. Catalyzes the demethylation of specific methylglutamate residues introduced into the chemoreceptors (methyl-accepting chemotaxis proteins or MCP) by CheR. Also mediates the irreversible deamidation of specific glutamine residues to glutamic acid. The chain is Protein-glutamate methylesterase/protein-glutamine glutaminase 1 from Shewanella denitrificans (strain OS217 / ATCC BAA-1090 / DSM 15013).